Here is a 135-residue protein sequence, read N- to C-terminus: Lysozyme 2 (135 aa).

Positions 1-18 (MNFLILFCVVASASVVYS) are cleaved as a signal peptide. An I-type lysozyme domain is found at 19 to 135 (SISDQCLRCI…WRLVQAKGCS (117 aa)). 6 disulfide bridges follow: Cys24/Cys100, Cys29/Cys35, Cys40/Cys49, Cys62/Cys82, Cys72/Cys78, and Cys96/Cys114. The Proton donor role is filled by Glu32. Asp43 functions as the Nucleophile in the catalytic mechanism. 55 to 61 (KQGYWTD) lines the substrate pocket. Residues Tyr86 and 107–109 (HNG) each bind substrate.

In terms of tissue distribution, expressed in the epithelia of the basophil cells in the digestive tubules, but not in the epithelial cells lining the digestive ducts and stomach. Expressed at a much lower level in the style sac-midgut tissues. No expression detected in mantle, gills, labial palps or hemocytes.

The protein localises to the secreted. The enzyme catalyses Hydrolysis of (1-&gt;4)-beta-linkages between N-acetylmuramic acid and N-acetyl-D-glucosamine residues in a peptidoglycan and between N-acetyl-D-glucosamine residues in chitodextrins.. Activity decreased by 80% by addition of 0.01 M calcium, zinc or magnesium. Activity only decreased by 17% by addition of ammonium, and by 2% by addition of sodium. Functionally, the main role of this lysozyme is in digestion. Has antibacterial activity against the Gram-positive bacterium P.cerevisiae and the Gram-negative bacteria E.coli and V.vulnificus. Shows some chitinase activity but no isopeptidase activity. The polypeptide is Lysozyme 2 (Crassostrea virginica (Eastern oyster)).